We begin with the raw amino-acid sequence, 360 residues long: Peptide chain release factor 1 (360 aa).

Residue Q236 is modified to N5-methylglutamine.

It belongs to the prokaryotic/mitochondrial release factor family. Methylated by PrmC. Methylation increases the termination efficiency of RF1.

The protein resides in the cytoplasm. Its function is as follows. Peptide chain release factor 1 directs the termination of translation in response to the peptide chain termination codons UAG and UAA. In Ligilactobacillus salivarius (strain UCC118) (Lactobacillus salivarius), this protein is Peptide chain release factor 1.